The chain runs to 251 residues: CDP-diacylglycerol pyrophosphatase (251 aa).

A helical membrane pass occupies residues Gly-5–Phe-25.

Belongs to the Cdh family.

Its subcellular location is the cell inner membrane. It catalyses the reaction a CDP-1,2-diacyl-sn-glycerol + H2O = a 1,2-diacyl-sn-glycero-3-phosphate + CMP + 2 H(+). The protein operates within phospholipid metabolism; CDP-diacylglycerol degradation; phosphatidate from CDP-diacylglycerol: step 1/1. The polypeptide is CDP-diacylglycerol pyrophosphatase (Salmonella paratyphi A (strain ATCC 9150 / SARB42)).